Reading from the N-terminus, the 311-residue chain is tRNA(Ile)-lysidine synthase (311 aa).

ATP is bound at residue 31–36 (SGGKDS).

This sequence belongs to the tRNA(Ile)-lysidine synthase family.

The protein localises to the cytoplasm. It carries out the reaction cytidine(34) in tRNA(Ile2) + L-lysine + ATP = lysidine(34) in tRNA(Ile2) + AMP + diphosphate + H(+). Ligates lysine onto the cytidine present at position 34 of the AUA codon-specific tRNA(Ile) that contains the anticodon CAU, in an ATP-dependent manner. Cytidine is converted to lysidine, thus changing the amino acid specificity of the tRNA from methionine to isoleucine. This chain is tRNA(Ile)-lysidine synthase, found in Petrotoga mobilis (strain DSM 10674 / SJ95).